We begin with the raw amino-acid sequence, 229 residues long: GTP cyclohydrolase 1 (229 aa).

A disordered region spans residues 1 to 31 (MFRESDNTIAPSNQDLNKPVVDKEQPAERTP). Residues 7-16 (NTIAPSNQDL) show a composition bias toward polar residues. Residues C117, H120, and C188 each coordinate Zn(2+).

It belongs to the GTP cyclohydrolase I family. As to quaternary structure, toroid-shaped homodecamer, composed of two pentamers of five dimers.

The enzyme catalyses GTP + H2O = 7,8-dihydroneopterin 3'-triphosphate + formate + H(+). It functions in the pathway cofactor biosynthesis; 7,8-dihydroneopterin triphosphate biosynthesis; 7,8-dihydroneopterin triphosphate from GTP: step 1/1. This Rhodopirellula baltica (strain DSM 10527 / NCIMB 13988 / SH1) protein is GTP cyclohydrolase 1.